A 354-amino-acid polypeptide reads, in one-letter code: Uroporphyrinogen decarboxylase (354 aa).

Substrate contacts are provided by residues 27 to 31 (RQAGR), aspartate 77, tyrosine 154, threonine 209, and histidine 327.

The protein belongs to the uroporphyrinogen decarboxylase family. In terms of assembly, homodimer.

The protein resides in the cytoplasm. It catalyses the reaction uroporphyrinogen III + 4 H(+) = coproporphyrinogen III + 4 CO2. Its pathway is porphyrin-containing compound metabolism; protoporphyrin-IX biosynthesis; coproporphyrinogen-III from 5-aminolevulinate: step 4/4. Functionally, catalyzes the decarboxylation of four acetate groups of uroporphyrinogen-III to yield coproporphyrinogen-III. The protein is Uroporphyrinogen decarboxylase of Salmonella heidelberg (strain SL476).